Reading from the N-terminus, the 590-residue chain is Ankyrin repeat domain-containing protein 13A (590 aa).

ANK repeat units lie at residues 40–69 and 73–102; these read RGRT…DVTK and QGWT…YHNT. Phosphoserine is present on serine 205. UIM domains are found at residues 483 to 502, 519 to 538, 549 to 568, and 574 to 590; these read EDYE…SSRS, TYDA…STEG, RFDN…LEEW, and EEEA…LTDK. Serine 586 is modified (phosphoserine).

In terms of assembly, interacts (via the UIM 3 and 4 repeats) with EGFR (ubiquitinated); the interaction is direct, inhibited by ANKRD13A monoubiquitination and may regulate EGFR internalization. Monoubiquitinated, inhibits interaction with ubiquitinated EGFR.

Its subcellular location is the cell membrane. It is found in the late endosome. Its function is as follows. Ubiquitin-binding protein that specifically recognizes and binds 'Lys-63'-linked ubiquitin. Does not bind 'Lys-48'-linked ubiquitin. Positively regulates the internalization of ligand-activated EGFR by binding to the Ub moiety of ubiquitinated EGFR at the cell membrane. This Homo sapiens (Human) protein is Ankyrin repeat domain-containing protein 13A (ANKRD13A).